The primary structure comprises 798 residues: Integrin beta-1 (798 aa).

An N-terminal signal peptide occupies residues 1–20 (MNLQPIFWIGLISSICCVFA). Positions 26 to 76 (RCLKANAKSCGECIQAGPNCGWCTNSTFLQEGMPTSARCDDLEALKKKGCP) constitute a PSI domain. Disulfide bonds link Cys27/Cys45, Cys35/Cys464, Cys38/Cys64, Cys48/Cys75, Cys207/Cys213, Cys261/Cys301, Cys401/Cys415, Cys435/Cys462, Cys466/Cys486, Cys477/Cys489, Cys491/Cys500, Cys502/Cys533, Cys516/Cys531, Cys525/Cys536, Cys538/Cys553, Cys555/Cys576, Cys560/Cys574, Cys568/Cys579, Cys581/Cys590, Cys592/Cys615, Cys599/Cys613, Cys607/Cys618, Cys620/Cys630, Cys633/Cys636, Cys640/Cys691, Cys646/Cys665, Cys649/Cys661, and Cys699/Cys723. N-linked (GlcNAc...) asparagine glycosylation is present at Asn50. A disordered region spans residues 75 to 107 (CPPDDIENPRGSKDIKKNKNVTNRSKGTAEKLK). The span at 81–91 (ENPRGSKDIKK) shows a compositional bias: basic and acidic residues. N-linked (GlcNAc...) asparagine glycosylation is found at Asn94 and Asn97. The VWFA domain occupies 140–378 (DYPIDLYYLM…QLIIDAYNSL (239 aa)). 2 residues coordinate Mg(2+): Ser152 and Ser154. Ca(2+) contacts are provided by Ser154, Asp157, Asp158, and Glu189. Positions 207–213 (CTSEQNC) are CX3CL1-binding. A glycan (N-linked (GlcNAc...) asparagine) is linked at Asn212. Positions 244, 246, 248, and 249 each coordinate Ca(2+). Position 249 (Glu249) interacts with Mg(2+). A glycan (N-linked (GlcNAc...) asparagine) is linked at Asn269. Positions 295-314 (LPNDGQCHLENNMYTMSHYY) are CX3CL1-binding. Residue Ala362 participates in Ca(2+) binding. N-linked (GlcNAc...) asparagine glycosylation is found at Asn363, Asn406, and Asn417. Residues 383-465 (ILENSKLSEG…VILQYICECE (83 aa)) form an interaction with TMEM182 region. I-EGF domains lie at 466-501 (CQSE…RHCE), 502-554 (CSTD…KFCE), 555-591 (CDNF…SACD), and 592-631 (CSLD…QTCE). A glycan (N-linked (GlcNAc...) asparagine) is linked at Asn481. Asn520 is a glycosylation site (N-linked (GlcNAc...) asparagine). N-linked (GlcNAc...) asparagine glycosylation is present at Asn584. Asn669 is a glycosylation site (N-linked (GlcNAc...) asparagine). Residues 729 to 749 (IIPIVAGVVAGIVLIGLALLL) traverse the membrane as a helical segment. The segment at 762 to 767 (EFAKFE) is signal for sorting from recycling endosomes; interaction with ACAP1. Thr777 carries the post-translational modification Phosphothreonine. The residue at position 783 (Tyr783) is a Phosphotyrosine. Residue Ser785 is modified to Phosphoserine. The interaction with ITGB1BP1 stretch occupies residues 785–792 (SAVTTVVN). Thr789 carries the phosphothreonine modification. An N6-acetyllysine; alternate modification is found at Lys794. Residue Lys794 forms a Glycyl lysine isopeptide (Lys-Gly) (interchain with G-Cter in SUMO1); alternate linkage.

The protein belongs to the integrin beta chain family. As to quaternary structure, interacts with seprase FAP (seprase); the interaction occurs at the cell surface of invadopodia membrane in a collagen-dependent manner. Heterodimer of an alpha and a beta subunit. Beta-1 associates with either alpha-1, alpha-2, alpha-3, alpha-4, alpha-5, alpha-6, alpha-7, alpha-8, alpha-9, alpha-10, alpha-11 or alpha-V. ITGA6:ITGB1 is found in a complex with CD9; interaction takes place in oocytes and is involved in sperm-egg fusion. Binds LGALS3BP and NMRK2, when associated with alpha-7, but not with alpha-5. Interacts with FLNA, FLNB, FLNC and RANBP9. Interacts with KRT1 in the presence of RACK1 and SRC. Interacts with JAML; integrin alpha-4/beta-1 may regulate leukocyte to endothelial cells adhesion by controlling JAML homodimerization. Interacts with RAB21. Interacts (via the cytoplasmic region) with RAB25 (via the hypervariable C-terminal region). Interacts with MYO10. Interacts with ITGB1BP1 (via C-terminal region); the interaction is a prerequisite for focal adhesion disassembly. Interacts with TLN1; the interaction is prevented by competitive binding of ITGB1BP1. Interacts with ACAP1; required for ITGB1 recycling. Interacts with ASAP3. Interacts with FERMT2; the interaction is inhibited in presence of ITGB1BP1. Interacts with DAB2. Interacts with FGR and HCK. Interacts with alpha-7A and alpha-7B in adult skeletal muscle. Interacts with alpha-7B in cardiomyocytes of adult heart. Interacts with EMP2; the interaction may be direct or indirect and ITGB1 has a heterodimer form. ITGA5:ITGB1 interacts with CCN3. ITGA4:ITGB1 is found in a ternary complex with CX3CR1 and CX3CL1. ITGA5:ITGB1 interacts with FBN1. ITGA5:ITGB1 acts as a receptor for fibronectin FN1 and mediates R-G-D-dependent cell adhesion to FN1. ITGA5:ITGB1 interacts with IL1B. Interacts with MDK. ITGA4:ITGB1 interacts with MDK; this interaction mediates MDK-induced osteoblast cells migration through PXN phosphorylation. ITGA6:ITGB1 interacts with MDK; this interaction mediates MDK-induced neurite-outgrowth. ITGA5:ITGB1 interacts with ACE2. Interacts with TMEM182 and LAMB1. Interacts with tensin TNS3; TNS3 also interacts with PEAK1, thus acting as an adapter molecule to bridge the association of PEAK1 with ITGB1. Interacts with tensin TNS4; the interaction displaces tensin TNS3 from the ITGB1 cytoplasmic tail and promotes ITGB1 stability. Integrin ITGA9:ITGB1 interacts with SPP1/OPN (via N-terminus). Integrin ITGA9:ITGB1 interacts with TNC/TNFN3 (via the 3rd Fibronectin type-III domain). Integrins ITGA4:ITGB1 and ITGA9:ITGB1 interact with SVEP1 (via Sushi domain 21); thereby inhibit Ca(2+) intracellular signaling and as a result repress vasocontraction. ITGA4:ITGB1 and ITGA5:ITGB1 interacts with SELP. Interacts with CD248. ITGA5:ITGB1 interacts with IGFBP1. ITGA4:ITGB1 interacts with BCAM. Interacts with ADGRG6.

It localises to the cell membrane. Its subcellular location is the cell projection. It is found in the invadopodium membrane. The protein localises to the ruffle membrane. The protein resides in the recycling endosome. It localises to the melanosome. Its subcellular location is the lamellipodium. It is found in the ruffle. The protein localises to the cell junction. The protein resides in the focal adhesion. Integrins alpha-1/beta-1, alpha-2/beta-1, alpha-10/beta-1 and alpha-11/beta-1 are receptors for collagen. Integrins alpha-1/beta-1 and alpha-2/beta-2 recognize the proline-hydroxylated sequence G-F-P-G-E-R in collagen. Integrins alpha-2/beta-1, alpha-3/beta-1, alpha-4/beta-1, alpha-5/beta-1, alpha-8/beta-1, alpha-10/beta-1, alpha-11/beta-1 and alpha-V/beta-1 are receptors for fibronectin. Alpha-4/beta-1 recognizes one or more domains within the alternatively spliced CS-1 and CS-5 regions of fibronectin. Integrin alpha-5/beta-1 is a receptor for fibrinogen. Integrin alpha-1/beta-1, alpha-2/beta-1, alpha-6/beta-1 and alpha-7/beta-1 are receptors for lamimin. Integrin alpha-6/beta-1 (ITGA6:ITGB1) is present in oocytes and is involved in sperm-egg fusion. Integrin alpha-4/beta-1 is a receptor for VCAM1 and recognizes the sequence Q-I-D-S in VCAM1. Integrin alpha-9/beta-1 is a receptor for VCAM1, cytotactin and osteopontin. It recognizes the sequence A-E-I-D-G-I-E-L in cytotactin. Integrin alpha-3/beta-1 is a receptor for epiligrin, thrombospondin and CSPG4. Integrin alpha-3/beta-1 provides a docking site for FAP (seprase) at invadopodia plasma membranes in a collagen-dependent manner and hence may participate in the adhesion, formation of invadopodia and matrix degradation processes, promoting cell invasion. Alpha-3/beta-1 may mediate with LGALS3 the stimulation by CSPG4 of endothelial cells migration. Integrin alpha-V/beta-1 is a receptor for vitronectin. Beta-1 integrins recognize the sequence R-G-D in a wide array of ligands. When associated with alpha-7/beta-1 integrin, regulates cell adhesion and laminin matrix deposition. Involved in promoting endothelial cell motility and angiogenesis. Involved in osteoblast compaction through the fibronectin fibrillogenesis cell-mediated matrix assembly process and the formation of mineralized bone nodules. May be involved in up-regulation of the activity of kinases such as PKC via binding to KRT1. Together with KRT1 and RACK1, serves as a platform for SRC activation or inactivation. Plays a mechanistic adhesive role during telophase, required for the successful completion of cytokinesis. ITGA4:ITGB1 binds to fractalkine (CX3CL1) and may act as its coreceptor in CX3CR1-dependent fractalkine signaling. ITGA4:ITGB1 and ITGA5:ITGB1 bind to PLA2G2A via a site (site 2) which is distinct from the classical ligand-binding site (site 1) and this induces integrin conformational changes and enhanced ligand binding to site 1. ITGA5:ITGB1 acts as a receptor for fibrillin-1 (FBN1) and mediates R-G-D-dependent cell adhesion to FBN1. ITGA5:ITGB1 is a receptor for IL1B and binding is essential for IL1B signaling. ITGA5:ITGB3 is a receptor for soluble CD40LG and is required for CD40/CD40LG signaling. Plays an important role in myoblast differentiation and fusion during skeletal myogenesis. ITGA9:ITGB1 may play a crucial role in SVEP1/polydom-mediated myoblast cell adhesion. Integrins ITGA9:ITGB1 and ITGA4:ITGB1 repress PRKCA-mediated L-type voltage-gated channel Ca(2+) influx and ROCK-mediated calcium sensitivity in vascular smooth muscle cells via their interaction with SVEP1, thereby inhibit vasocontraction. This Pongo abelii (Sumatran orangutan) protein is Integrin beta-1 (ITGB1).